Reading from the N-terminus, the 4061-residue chain is Hybrid PKS-NRPS synthetase tasS (4061 aa).

In terms of domain architecture, Ketosynthase family 3 (KS3) spans 7–472 (QEPIAVIGMA…GTNAHAIIEG (466 aa)). C180 is a catalytic residue. Residues 586 to 911 (VFTGQGAQWP…RQKNDVEELL (326 aa)) are malonyl-CoA:ACP transacylase (MAT) domain. Residues 977–1113 (HPLLGRRCVE…ATVNVTFHEP (137 aa)) form an N-terminal hotdog fold region. The dehydratase (DH) domain stretch occupies residues 977 to 1280 (HPLLGRRCVE…VRVQPFSVAG (304 aa)). The 306-residue stretch at 977-1282 (HPLLGRRCVE…VQPFSVAGPQ (306 aa)) folds into the PKS/mFAS DH domain. The Proton acceptor; for dehydratase activity role is filled by H1010. Positions 1128–1282 (LANAEPQRLY…VQPFSVAGPQ (155 aa)) are C-terminal hotdog fold. D1188 serves as the catalytic Proton donor; for dehydratase activity. A methyltransferase (MT) domain region spans residues 1425-1619 (LDRFYEEGFE…GFNGVETHTP (195 aa)). The interval 2153–2325 (TYFLLGLSGE…GVVGSDMAIG (173 aa)) is ketoreductase (KR) domain. In terms of domain architecture, Carrier 1 spans 2437 to 2516 (EAIKVVFDTF…LLVEEAVDKL (80 aa)). O-(pantetheine 4'-phosphoryl)serine is present on S2475. A disordered region spans residues 2527–2617 (EHGGEPDLTQ…QKHQEQTSQS (91 aa)). Residues 2556–2576 (TSAASSSDTGSDSSPTSNSVS) show a composition bias toward low complexity. Residues 2577–2592 (ETQTGTPLETPMSTTE) are compositionally biased toward polar residues. A condensation (C) domain region spans residues 2632–3077 (QMTFGQNRFW…ELATWDTESE (446 aa)). The tract at residues 3103-3510 (QVIADHPDAV…RGYLTVEGRI (408 aa)) is adenylation (A) (KR) domain. Positions 3633 to 3712 (QNLTATERTL…SMAALLDDGV (80 aa)) constitute a Carrier 2 domain. S3672 is subject to O-(pantetheine 4'-phosphoryl)serine. The tract at residues 3813-3969 (DIDVVLHCAA…LSPLEDAVEA (157 aa)) is reductase (RED) domain.

It in the C-terminal section; belongs to the NRP synthetase family.

It carries out the reaction (2S,4S)-4-hydroxy-4-methylglutamate + 8 malonyl-CoA + 3 S-adenosyl-L-methionine + ATP + 8 NADPH + 11 H(+) = (2S)-3-[(2S)-3,5-dioxo-4-[(2E,4R,6R,8E,10E,12E)-4,6,12-trimethyltetradeca-2,8,10,12-tetraenoyl]pyrrolidin-2-yl]-2-hydroxy-2-methylpropanoate + AMP + 3 S-adenosyl-L-homocysteine + 8 CO2 + diphosphate + 8 NADP(+) + 8 CoA + 6 H2O. It participates in secondary metabolite biosynthesis. Hybrid PKS-NRPS synthetase; part of the gene cluster that mediates the biosynthesis of the tetramic acids Sch210971 and Sch210972, potential anti-HIV fungal natural product that contain a decalin core. The PKS module of tasS together with the enoylreductase tasC catalyze the formation of the polyketide unit which is then conjugated to 4-hydroxyl-4-methyl glutamate (HMG) by the condensation domain of the tasS NRPS module. One unique structural feature of Sch210971 and Sch210972 is the tetramic acid motif proposed to be derived from the non-proteinogenic amino acid HMG, by a Dieckmann-type condensation catalyzed by the reductase domain of tasS. The aldolase tasA catalyzes the aldol condensation of 2 molecules of pyruvic acid to yield the intermediate 4-hydroxyl-4-methyl-2-oxoglutarate (HMOG), which can then be stereoselectively transaminated, may be by tasG, to form HMG. The Diels-Alderase tas3 then uses the Dieckmann product of tasS as substrate and catalyzes the Diels-Alder cycloaddition to form the decalin ring of Sch210971 and Sch210972. This chain is Hybrid PKS-NRPS synthetase tasS, found in Hapsidospora irregularis.